A 514-amino-acid chain; its full sequence is ATP synthase subunit alpha (514 aa).

Position 170–177 (170–177 (GDRQTGKT)) interacts with ATP.

This sequence belongs to the ATPase alpha/beta chains family. In terms of assembly, F-type ATPases have 2 components, CF(1) - the catalytic core - and CF(0) - the membrane proton channel. CF(1) has five subunits: alpha(3), beta(3), gamma(1), delta(1), epsilon(1). CF(0) has three main subunits: a(1), b(2) and c(9-12). The alpha and beta chains form an alternating ring which encloses part of the gamma chain. CF(1) is attached to CF(0) by a central stalk formed by the gamma and epsilon chains, while a peripheral stalk is formed by the delta and b chains.

It localises to the cell inner membrane. It catalyses the reaction ATP + H2O + 4 H(+)(in) = ADP + phosphate + 5 H(+)(out). Functionally, produces ATP from ADP in the presence of a proton gradient across the membrane. The alpha chain is a regulatory subunit. The chain is ATP synthase subunit alpha from Psychrobacter cryohalolentis (strain ATCC BAA-1226 / DSM 17306 / VKM B-2378 / K5).